Reading from the N-terminus, the 426-residue chain is Spermidine/putrescine import ATP-binding protein PotA (426 aa).

Positions isoleucine 6–isoleucine 238 constitute an ABC transporter domain. Glycine 40–serine 47 is an ATP binding site.

This sequence belongs to the ABC transporter superfamily. Spermidine/putrescine importer (TC 3.A.1.11.1) family. In terms of assembly, the complex is composed of two ATP-binding proteins (PotA), two transmembrane proteins (PotB and PotC) and a solute-binding protein (PotD).

The protein localises to the cell membrane. The enzyme catalyses ATP + H2O + polyamine-[polyamine-binding protein]Side 1 = ADP + phosphate + polyamineSide 2 + [polyamine-binding protein]Side 1.. Functionally, part of the ABC transporter complex PotABCD involved in spermidine/putrescine import. Responsible for energy coupling to the transport system. The polypeptide is Spermidine/putrescine import ATP-binding protein PotA (Lactococcus lactis subsp. cremoris (strain SK11)).